A 201-amino-acid polypeptide reads, in one-letter code: Lipopolysaccharide core heptose(II)-phosphate phosphatase (201 aa).

The first 35 residues, 1 to 35, serve as a signal peptide directing secretion; sequence MLAFTLRFIKNKRYLATLAGALVIIAGLTSQHAWS.

The protein belongs to the phosphoglycerate mutase family. Ais subfamily.

Its subcellular location is the periplasm. It functions in the pathway bacterial outer membrane biogenesis; lipopolysaccharide metabolism. Functionally, catalyzes the dephosphorylation of heptose(II) of the outer membrane lipopolysaccharide core. This Salmonella newport (strain SL254) protein is Lipopolysaccharide core heptose(II)-phosphate phosphatase.